The primary structure comprises 207 residues: ATP-dependent Clp protease proteolytic subunit (207 aa).

S111 acts as the Nucleophile in catalysis. Residue H136 is part of the active site.

This sequence belongs to the peptidase S14 family. In terms of assembly, fourteen ClpP subunits assemble into 2 heptameric rings which stack back to back to give a disk-like structure with a central cavity, resembling the structure of eukaryotic proteasomes.

The protein resides in the cytoplasm. The catalysed reaction is Hydrolysis of proteins to small peptides in the presence of ATP and magnesium. alpha-casein is the usual test substrate. In the absence of ATP, only oligopeptides shorter than five residues are hydrolyzed (such as succinyl-Leu-Tyr-|-NHMec, and Leu-Tyr-Leu-|-Tyr-Trp, in which cleavage of the -Tyr-|-Leu- and -Tyr-|-Trp bonds also occurs).. In terms of biological role, cleaves peptides in various proteins in a process that requires ATP hydrolysis. Has a chymotrypsin-like activity. Plays a major role in the degradation of misfolded proteins. The polypeptide is ATP-dependent Clp protease proteolytic subunit (Yersinia pseudotuberculosis serotype O:1b (strain IP 31758)).